The sequence spans 413 residues: Elongation factor 1-alpha (413 aa).

Residues 5-211 (KTHMNLAFIG…DALDEPDKPV (207 aa)) enclose the tr-type G domain. Residues 14 to 21 (GHVDHGKS) are G1. GTP is bound at residue 14-21 (GHVDHGKS). Ser21 is a binding site for Mg(2+). Residues 60-64 (GVTID) form a G2 region. Residues 81–84 (DCPG) are G3. Residues 81–85 (DCPGH) and 136–139 (NKMD) each bind GTP. The tract at residues 136-139 (NKMD) is G4. A G5 region spans residues 175 to 177 (SAF).

Belongs to the TRAFAC class translation factor GTPase superfamily. Classic translation factor GTPase family. EF-Tu/EF-1A subfamily.

It localises to the cytoplasm. It carries out the reaction GTP + H2O = GDP + phosphate + H(+). In terms of biological role, GTP hydrolase that promotes the GTP-dependent binding of aminoacyl-tRNA to the A-site of ribosomes during protein biosynthesis. This is Elongation factor 1-alpha from Methanosphaera stadtmanae (strain ATCC 43021 / DSM 3091 / JCM 11832 / MCB-3).